The primary structure comprises 556 residues: Glutamine--tRNA ligase (556 aa).

Residues 34–44 carry the 'HIGH' region motif; sequence PEPNGFLHIGH. Residues 35-37 and 41-47 contribute to the ATP site; these read EPN and HIGHAKA. L-glutamine is bound by residues Asp-67 and Tyr-212. ATP is bound by residues Thr-231, 261–262, and 269–271; these read RL and MSK. The short motif at 268-272 is the 'KMSKS' region element; that stretch reads LMSKR.

This sequence belongs to the class-I aminoacyl-tRNA synthetase family. As to quaternary structure, monomer.

It localises to the cytoplasm. The catalysed reaction is tRNA(Gln) + L-glutamine + ATP = L-glutaminyl-tRNA(Gln) + AMP + diphosphate. In Colwellia psychrerythraea (strain 34H / ATCC BAA-681) (Vibrio psychroerythus), this protein is Glutamine--tRNA ligase.